The sequence spans 177 residues: Translation initiation factor IF-3 (177 aa).

This sequence belongs to the IF-3 family. Monomer.

The protein resides in the cytoplasm. Its function is as follows. IF-3 binds to the 30S ribosomal subunit and shifts the equilibrium between 70S ribosomes and their 50S and 30S subunits in favor of the free subunits, thus enhancing the availability of 30S subunits on which protein synthesis initiation begins. The protein is Translation initiation factor IF-3 of Nostoc punctiforme (strain ATCC 29133 / PCC 73102).